The primary structure comprises 301 residues: Prohibitin-2 (301 aa).

Necessary for transcriptional repression stretches follow at residues 19–49 (VGTA…GQRA) and 150–174 (ASQL…RAKD). A coiled-coil region spans residues 190 to 237 (SREYTAAVEAKQVAQQEAQRAQFLVEKAKQEQKQKIVQAEGEATAAKM).

This sequence belongs to the prohibitin family. As to quaternary structure, the mitochondrial prohibitin complex consists of two subunits (PHB1 and PHB2), assembled into a membrane-associated ring-shaped supercomplex of approximately 1 mDa.

It is found in the mitochondrion inner membrane. It localises to the cytoplasm. Its subcellular location is the nucleus. The protein resides in the cell membrane. Protein with pleiotropic attributes mediated in a cell-compartment- and tissue-specific manner, which include the plasma membrane-associated cell signaling functions, mitochondrial chaperone, and transcriptional co-regulator of transcription factors and sex steroid hormones in the nucleus. In terms of biological role, in the mitochondria, together with PHB, forms large ring complexes (prohibitin complexes) in the inner mitochondrial membrane (IMM) and functions as a chaperone protein that stabilizes mitochondrial respiratory enzymes and maintains mitochondrial integrity in the IMM, which is required for mitochondrial morphogenesis, neuronal survival, and normal lifespan. Functionally, in the nucleus, serves as transcriptional co-regulator. The protein is Prohibitin-2 (PHB2) of Gallus gallus (Chicken).